Here is a 139-residue protein sequence, read N- to C-terminus: FAD synthase (139 aa).

ATP is bound by residues 8–9, 13–16, Asp92, and Tyr119; these read VF and HPGH.

Belongs to the archaeal FAD synthase family. As to quaternary structure, homodimer. The cofactor is a divalent metal cation.

The catalysed reaction is FMN + ATP + H(+) = FAD + diphosphate. Its pathway is cofactor biosynthesis; FAD biosynthesis; FAD from FMN: step 1/1. Its function is as follows. Catalyzes the transfer of the AMP portion of ATP to flavin mononucleotide (FMN) to produce flavin adenine dinucleotide (FAD) coenzyme. The polypeptide is FAD synthase (Picrophilus torridus (strain ATCC 700027 / DSM 9790 / JCM 10055 / NBRC 100828 / KAW 2/3)).